An 832-amino-acid polypeptide reads, in one-letter code: Prickle-like protein 1-B (832 aa).

The 109-residue stretch at phenylalanine 14–methionine 122 folds into the PET domain. LIM zinc-binding domains are found at residues alanine 124 to lysine 188, proline 189 to glutamate 249, and tyrosine 250 to histidine 313. 4 disordered regions span residues valine 312 to cysteine 346, glutamine 428 to asparagine 455, isoleucine 602 to asparagine 701, and cysteine 766 to serine 832. Basic and acidic residues-rich tracts occupy residues glutamate 432–arginine 453 and cysteine 603–methionine 614. Basic residues-rich tracts occupy residues arginine 669–lysine 680 and threonine 816–serine 832. A Cysteine methyl ester modification is found at cysteine 829. Cysteine 829 carries the S-farnesyl cysteine lipid modification. Positions isoleucine 830 to serine 832 are cleaved as a propeptide — removed in mature form.

It belongs to the prickle / espinas / testin family. In terms of assembly, interacts with dvl2/dsh and mapk8/jnk1. Expressed in the dorsal marginal zone of early gastrulae (stage 10). As gastrulation proceeds, expression expands to include the lateral and ventral marginal zones, excluding the few rows of cells above the blastopore lip. Expression moves dorsally with gastrulation cell movements, and by the end of gastrulation expression is seen in dorsal mesoderm and posterior but not anterior neural ectoderm. Expression becomes down-regulated in mesoderm but remains strong in posterior ectoderm through the neurula stages. During tailbud stages, expressed in the pronephric duct, tailbud, tailtip and forming somites. In the most posterior regions, expressed in notochord and in the floorplate of the neural tube with weak expression in the roofplate. At stage 30, expressed in a complex pattern in the head including strong expression in the lens and otic vesicle.

The protein localises to the cell membrane. Acts in a planar cell polarity (PCP) complex; polarization along the apical/basal axis of epithelial cells. Regulates the polarized assembly of fibronectrin on the surface of the mesoderm during gastrulation. Essential for gastrulation cell movements, cooperating with dvl2/dsh to activate jnk. Acts together with tes to control axial elongation. The polypeptide is Prickle-like protein 1-B (prickle1-b) (Xenopus laevis (African clawed frog)).